A 277-amino-acid polypeptide reads, in one-letter code: MADPWQECMDYAVTLARQAGEVVCEAIKNEMNVMLKSSPVDLVTATDQKVEKMLISSIKEKYPSHSFIGEESVAAGEKSILTDNPTWIIDPIDGTTNFVHRFPFVAVSIGFAVNKKIEFGVVYSCVEGKMYTARKGKGAFCNGQKLQVSQQEDITKSLLVTELGSSRTPETVRMVLSNMEKLFCIPVHGIRSVGTAAVNMCLVATGGADAYYEMGIHCWDVAGAGIIVTEAGGVLMDVTGGPFDLMSRRVIAANNRILAERIAKEIQVIPLQRDDED.

Positions 70, 90, 92, and 93 each coordinate Mg(2+). Glu70 contributes to the substrate binding site. Position 92-95 (92-95) interacts with substrate; it reads IDGT. Position 168 is a phosphothreonine (Thr168). Residues 194–196, Glu213, and Asp220 each bind substrate; that span reads GTA. A Mg(2+)-binding site is contributed by Asp220.

It belongs to the inositol monophosphatase superfamily. In terms of assembly, homodimer. Requires Mg(2+) as cofactor.

It is found in the cytoplasm. It catalyses the reaction a myo-inositol phosphate + H2O = myo-inositol + phosphate. The enzyme catalyses 1D-myo-inositol 1-phosphate + H2O = myo-inositol + phosphate. The catalysed reaction is 1D-myo-inositol 2-phosphate + H2O = myo-inositol + phosphate. It carries out the reaction 1D-myo-inositol 3-phosphate + H2O = myo-inositol + phosphate. It catalyses the reaction 1D-myo-inositol 4-phosphate + H2O = myo-inositol + phosphate. The enzyme catalyses 1D-myo-inositol 5-phosphate + H2O = myo-inositol + phosphate. The catalysed reaction is 1D-myo-inositol 6-phosphate + H2O = myo-inositol + phosphate. It carries out the reaction scyllo-inositol 1-phosphate + H2O = scyllo-inositol + phosphate. It catalyses the reaction alpha-D-galactose 1-phosphate + H2O = D-galactose + phosphate. The enzyme catalyses alpha-D-glucose 1-phosphate + H2O = D-glucose + phosphate. The catalysed reaction is D-glucose 6-phosphate + H2O = D-glucose + phosphate. It carries out the reaction beta-D-fructose 1-phosphate + H2O = D-fructose + phosphate. It catalyses the reaction glycerol 2-phosphate + H2O = glycerol + phosphate. The enzyme catalyses adenosine 2'-phosphate + H2O = adenosine + phosphate. Its pathway is polyol metabolism; myo-inositol biosynthesis; myo-inositol from D-glucose 6-phosphate: step 2/2. Activity with myo-inositol monophosphates and D-galactose 1-phosphate is inhibited by Li(+), Ca(2+) and Mn(2+), but also by Mg(2+) at concentrations above 3 mM. In terms of biological role, phosphatase involved in the dephosphorylation of myo-inositol monophosphates to generate myo-inositol. Is also able to dephosphorylate scyllo-inositol-phosphate, myo-inositol 1,4-diphosphate, scyllo-inositol-1,3-diphosphate and scyllo-inositol-1,4-diphosphate. Also dephosphorylates in vitro other sugar-phosphates including D-galactose-1-phosphate, glucose-1-phosphate, glucose-6-phosphate, fructose-1-phosphate, beta-glycerophosphate and 2'-AMP. Responsible for the provision of inositol required for synthesis of phosphatidylinositols and polyphosphoinositides, and involved in maintaining normal brain function. Has been implicated as the pharmacological target for lithium (Li(+)) action in brain, which is used to treat bipolar affective disorder. Is equally active with 1D-myo-inositol 1-phosphate, 1D-myo-inositol 3-phosphate and D-galactose 1-phosphate. This chain is Inositol monophosphatase 1, found in Homo sapiens (Human).